A 1346-amino-acid chain; its full sequence is Pikromycin polyketide synthase component PikAIV (1346 aa).

Residues 3 to 32 (SSNEQLVDALRASLKENEELRKESRRRADR) are a coiled coil. A Ketosynthase family 3 (KS3) domain is found at 34 to 461 (QEPMAIVGMS…GTNAHVVLEE (428 aa)). The module 6 stretch occupies residues 37–1332 (MAIVGMSCRF…HAPAVAEAVL (1296 aa)). Active-site for beta-ketoacyl synthase activity residues include Cys207, His342, and His382. An acyltransferase region spans residues 562–844 (FVFPGQGTQW…VLTMTLPDKV (283 aa)). The active-site Acyl-ester intermediate; for acyltransferase activity is Ser652. A Carrier domain is found at 945 to 1020 (SAVLAMVMRQ…ALAERISDEL (76 aa)). Ser980 carries the O-(pantetheine 4'-phosphoryl)serine modification. Positions 1028–1050 (AEPSDHEQAEEEKAAAPAGARSG) are disordered. A compositionally biased stretch (basic and acidic residues) spans 1030–1041 (PSDHEQAEEEKA). Residue Thr1125 participates in substrate binding. The tract at residues 1127-1332 (ANGGPHEFLR…HAPAVAEAVL (206 aa)) is thioesterase. Ser1196 serves as the catalytic Nucleophile; for thioesterase activity. Residues Gly1197 and Asp1224 each contribute to the substrate site. Residue His1316 is the Proton acceptor; for thioesterase activity of the active site.

Homodimer. Pikromycin PKS consists of a combination of multimodular (PikAI and PikAII) and monomodular (PikAIII and PikAIV) polypeptides each coding for a functional synthase subunit which participates in 1 (monomodular) or 2 (multimodular) of the six FAS-like elongation steps required for formation of the polyketide. Module 1, 2, 3, 4, 5, and 6 participating in biosynthesis steps 1, 2, 3, 4, 5, and 6, respectively. Pantetheine 4'-phosphate serves as cofactor.

It catalyses the reaction 5 (S)-methylmalonyl-CoA + malonyl-CoA + 5 NADPH + 11 H(+) = 10-deoxymethynolide + 6 CO2 + 5 NADP(+) + 6 CoA + 2 H2O. The catalysed reaction is 6 (S)-methylmalonyl-CoA + malonyl-CoA + 5 NADPH + 12 H(+) = narbonolide + 7 CO2 + 5 NADP(+) + 7 CoA + 2 H2O. Its pathway is antibiotic biosynthesis. With respect to regulation, irreversibly inhibited by (2S,3R,4S)-2,4-dihydroxy-3-methylhexyl-phosphonic acid and (3R,4S)-4-hydroxy-3-methyl-2-oxohexyl-phosphonic acid. Involved in the biosynthesis of 12- and 14-membered ring macrolactone antibiotics such as methymycin and neomethymycin, and pikromycin and narbomycin, respectively. Component of the pikromycin PKS which catalyzes the biosynthesis of both precursors 10-deoxymethynolide (12-membered ring macrolactone) and narbonolide (14-membered ring macrolactone). Chain elongation through PikAI, PikAII and PikAIII followed by thioesterase catalyzed termination results in the production of 10-deoxymethynolide, while continued elongation through PikAIV, followed by thioesterase (TE) catalyzed cyclization results in the biosynthesis of the narbonolide. The thioesterase can use a series of diketide-N-acetylcysteamine (SNAC) thioesters, but has a strong preference for the 2-methyl-3-ketopentanoyl-SNAC over the stereoisomers of 2-methyl-3-hydroxyacyl-SNAC. This is Pikromycin polyketide synthase component PikAIV from Streptomyces venezuelae.